An 85-amino-acid polypeptide reads, in one-letter code: Photosystem I reaction center subunit PsaK (85 aa).

Transmembrane regions (helical) follow at residues 12–34 (TVTW…IAVG) and 54–76 (GGMG…IGAI).

Belongs to the PsaG/PsaK family.

The protein resides in the cellular thylakoid membrane. This is Photosystem I reaction center subunit PsaK from Parasynechococcus marenigrum (strain WH8102).